Reading from the N-terminus, the 616-residue chain is Dihydroxy-acid dehydratase (616 aa).

Mg(2+) is bound at residue D81. C122 contacts [2Fe-2S] cluster. The Mg(2+) site is built by D123 and K124. N6-carboxylysine is present on K124. A [2Fe-2S] cluster-binding site is contributed by C195. E491 contributes to the Mg(2+) binding site. Catalysis depends on S517, which acts as the Proton acceptor.

Belongs to the IlvD/Edd family. As to quaternary structure, homodimer. [2Fe-2S] cluster is required as a cofactor. It depends on Mg(2+) as a cofactor.

The enzyme catalyses (2R)-2,3-dihydroxy-3-methylbutanoate = 3-methyl-2-oxobutanoate + H2O. The catalysed reaction is (2R,3R)-2,3-dihydroxy-3-methylpentanoate = (S)-3-methyl-2-oxopentanoate + H2O. Its pathway is amino-acid biosynthesis; L-isoleucine biosynthesis; L-isoleucine from 2-oxobutanoate: step 3/4. It functions in the pathway amino-acid biosynthesis; L-valine biosynthesis; L-valine from pyruvate: step 3/4. In terms of biological role, functions in the biosynthesis of branched-chain amino acids. Catalyzes the dehydration of (2R,3R)-2,3-dihydroxy-3-methylpentanoate (2,3-dihydroxy-3-methylvalerate) into 2-oxo-3-methylpentanoate (2-oxo-3-methylvalerate) and of (2R)-2,3-dihydroxy-3-methylbutanoate (2,3-dihydroxyisovalerate) into 2-oxo-3-methylbutanoate (2-oxoisovalerate), the penultimate precursor to L-isoleucine and L-valine, respectively. This Salmonella paratyphi A (strain ATCC 9150 / SARB42) protein is Dihydroxy-acid dehydratase.